We begin with the raw amino-acid sequence, 63 residues long: Protein BP4A (63 aa).

Pollen specific.

In Brassica napus (Rape), this protein is Protein BP4A (BP4A).